A 478-amino-acid chain; its full sequence is Transposase for insertion sequence element IS231E (478 aa).

Belongs to the transposase 11 family.

Functionally, involved in the transposition of the insertion sequence. This chain is Transposase for insertion sequence element IS231E, found in Bacillus thuringiensis subsp. finitimus.